The chain runs to 333 residues: Glycerol-3-phosphate dehydrogenase [NAD(P)+] (333 aa).

Ser13, Trp14, Arg34, and Lys108 together coordinate NADPH. Sn-glycerol 3-phosphate contacts are provided by Lys108, Gly137, and Ser139. NADPH is bound at residue Ala141. Sn-glycerol 3-phosphate-binding residues include Lys192, Asp245, Ser255, Arg256, and Asn257. Lys192 acts as the Proton acceptor in catalysis. Arg256 serves as a coordination point for NADPH. Residue Glu282 participates in NADPH binding.

Belongs to the NAD-dependent glycerol-3-phosphate dehydrogenase family.

Its subcellular location is the cytoplasm. The enzyme catalyses sn-glycerol 3-phosphate + NAD(+) = dihydroxyacetone phosphate + NADH + H(+). It catalyses the reaction sn-glycerol 3-phosphate + NADP(+) = dihydroxyacetone phosphate + NADPH + H(+). It functions in the pathway membrane lipid metabolism; glycerophospholipid metabolism. In terms of biological role, catalyzes the reduction of the glycolytic intermediate dihydroxyacetone phosphate (DHAP) to sn-glycerol 3-phosphate (G3P), the key precursor for phospholipid synthesis. This chain is Glycerol-3-phosphate dehydrogenase [NAD(P)+], found in Thioalkalivibrio sulfidiphilus (strain HL-EbGR7).